The primary structure comprises 1092 residues: MDVEDENETLRRFFEGHDINGALEPSNIDTSILEDYISKEDSSEICFPDIPSSVSYASPQPCGSSGVHLSSVLSNVGHTGSINSGGVHHLGQQMAVRPGPGPTCGGPPYPPHLNCNNNNAMLNPKGYPMCMSNQGLPIKAEPKTSYAAGTLPDSPPDSGSEAYSPQQLSDPHLLRTMTPENICHITPPSRLEHPPPPHLQGPLPPHSIHQQHYPSMQRELYMKVESMMPQYQNLGPAMPPADLHHAQQSQMLHQLLQQQHGAELPVHPSKKRKHSDSPTNTLREQISNGGMVKSEPGLIQDNDSLNGSYLDPNYQSIKWQPHLQNKWVSLYDASYKELPMLTYKVDADKGFNFSTGDDSFVCQKKNHFQVTVYIGMIGEPKYVKTPEGILPIECFFLKLNGVKLEAINQAISIEQSQSDRSKRPFHPVTLSLPPDQVTKVTVGRLHFSETTSNNMRKKGKPNPDQRYFLLVVALQVQAQNQTYLVAAQASERIIVRASNPGQFESDSEVLWQRGQLPDTVFHHGRIGINTERPDEALVVHGNVKIMGSLMHPSDIRAKESVEEVDTTEQLKRISQMRLVHYHYKPEFASTVGLDENAAETGVIAQEVQEILPEAVKESGDLVCANGETIENFLVVNKERIFMENVGAVKELCKLTDNLETRIDELERWSHKLAKLRRLDSMKSTNSHTGSSQFSRAGSVPYKQRPPKVMGKTVPGPAHQSCVSQRFLQATIIALVIIMAFSVISMTTLYVLNLRSEDDMLGIDGSLTPPGSCTLTFFRQIHLTLPYALCTGSSQNFDTTQLKGNTTPPPKITKSPDWQQDPPLTINLCMDPPCEVVCCPHILSSESPTITRKTSAASAETISQTDPAPSTIIRKAKSRNLDKNRNSLQTLPRPVSPLPPYTQGKNKHSPNSLPVRDVRKRRSLEEESTPITPMDRTQGNSNDSRYSLTSLRLLETDALITNRSCSSMDTCGSGNYTYKLPISKYSPLSGSLSLELNSSSPVSVNFCETSKGKGCQEPAAVTSPRDQSCPQGTDVCVTQVSPTSHLWSLQLLPSQDFTFHLRVSPPGASGCDDLSIDPSQVTDYYFRFYRLCD.

Over 1–730 (MDVEDENETL…CVSQRFLQAT (730 aa)) the chain is Cytoplasmic. Disordered regions lie at residues 145–168 (SYAAGTLPDSPPDSGSEAYSPQQL), 187–210 (PPSRLEHPPPPHLQGPLPPHSIHQ), and 258–282 (QQHGAELPVHPSKKRKHSDSPTNTL). The span at 196 to 205 (PPHLQGPLPP) shows a compositional bias: pro residues. The segment at residues 246–507 (AQQSQMLHQL…SNPGQFESDS (262 aa)) is a DNA-binding region (NDT80). Positions 553 to 662 (SDIRAKESVE…KLTDNLETRI (110 aa)) constitute a Peptidase S74 domain. A coiled-coil region spans residues 646 to 677 (GAVKELCKLTDNLETRIDELERWSHKLAKLRR). Residues 681–695 (MKSTNSHTGSSQFSR) are compositionally biased toward polar residues. Positions 681–714 (MKSTNSHTGSSQFSRAGSVPYKQRPPKVMGKTVP) are disordered. The helical transmembrane segment at 731–751 (IIALVIIMAFSVISMTTLYVL) threads the bilayer. The Lumenal portion of the chain corresponds to 752 to 1092 (NLRSEDDMLG…YYFRFYRLCD (341 aa)). Disordered stretches follow at residues 798 to 817 (TTQLKGNTTPPPKITKSPDW) and 849 to 945 (ITRK…DSRY). 2 stretches are compositionally biased toward polar residues: residues 849-867 (ITRKTSAASAETISQTDPA) and 928-945 (TPITPMDRTQGNSNDSRY). N-linked (GlcNAc...) asparagine glycosylation is found at asparagine 941, asparagine 961, asparagine 974, and asparagine 996.

The protein belongs to the MRF family. Homotrimer. In terms of processing, follows autocatalytic cleavage via the peptidase S74 domain. Autoprocessing is apparently constitutive and is essential for transcriptional activity.

It localises to the endoplasmic reticulum membrane. It is found in the nucleus. Its subcellular location is the cytoplasm. In terms of biological role, constitutes a precursor of the transcription factor. Mediates the autocatalytic cleavage that releases the Myelin regulatory factor, N-terminal component that specifically activates transcription of central nervous system (CNS) myelin genes. Membrane-bound part that has no transcription factor activity and remains attached to the endoplasmic reticulum membrane following cleavage. Its function is as follows. Transcription factor that specifically activates expression of myelin genes during oligodendrocyte (OL) maturation, thereby playing a central role in oligodendrocyte maturation and CNS myelination. This is Myelin regulatory factor (myrf) from Xenopus laevis (African clawed frog).